A 670-amino-acid chain; its full sequence is FAD-binding monooxygenase ausC (670 aa).

Residues 144–147 (TWYW), 156–157 (DT), and Tyr162 each bind FAD. 154–156 (MCD) provides a ligand contact to NADP(+). NADP(+)-binding positions include 299–305 (TGASAVQ) and 322–323 (RT).

It belongs to the FAD-binding monooxygenase family. Requires FAD as cofactor.

The catalysed reaction is preaustinoid A + AH2 + O2 = preaustinoid A1 + A + H2O. It participates in secondary metabolite biosynthesis; terpenoid biosynthesis. In terms of biological role, FAD-binding monooxygenase; part of the gene cluster that mediates the biosynthesis of calidodehydroaustin, a fungal meroterpenoid. The first step of the pathway is the synthesis of 3,5-dimethylorsellinic acid by the polyketide synthase ausA. 3,5-dimethylorsellinic acid is then prenylated by the polyprenyl transferase ausN. Further epoxidation by the FAD-dependent monooxygenase ausM and cyclization by the probable terpene cyclase ausL lead to the formation of protoaustinoid A. Protoaustinoid A is then oxidized to spiro-lactone preaustinoid A3 by the combined action of the FAD-binding monooxygenases ausB and ausC, and the dioxygenase ausE. Acid-catalyzed keto-rearrangement and ring contraction of the tetraketide portion of preaustinoid A3 by ausJ lead to the formation of preaustinoid A4. The aldo-keto reductase ausK, with the help of ausH, is involved in the next step by transforming preaustinoid A4 into isoaustinone which is in turn hydroxylated by the P450 monooxygenase ausI to form austinolide. The cytochrome P450 monooxygenase ausG modifies austinolide to austinol. Austinol is further acetylated to austin by the O-acetyltransferase ausP, which spontaneously changes to dehydroaustin. The cytochrome P450 monooxygenase ausR then converts dehydroaustin is into 7-dehydrodehydroaustin. The hydroxylation catalyzed by ausR permits the O-acetyltransferase ausQ to add an additional acetyl group to the molecule, leading to the formation of acetoxydehydroaustin. The short chain dehydrogenase ausT catalyzes the reduction of the double bond present between carbon atoms 1 and 2 to convert 7-dehydrodehydroaustin into 1,2-dihydro-7-hydroxydehydroaustin. AusQ catalyzes not only an acetylation reaction but also the addition of the PKS ausV diketide product to 1,2-dihydro-7-hydroxydehydroaustin, forming precalidodehydroaustin. Finally, the iron/alpha-ketoglutarate-dependent dioxygenase converts precalidodehydroaustin into calidodehydroaustin. The protein is FAD-binding monooxygenase ausC of Aspergillus calidoustus.